A 91-amino-acid chain; its full sequence is Small ribosomal subunit protein uS15c (91 aa).

The protein belongs to the universal ribosomal protein uS15 family. In terms of assembly, part of the 30S ribosomal subunit.

It is found in the plastid. The protein resides in the chloroplast. This chain is Small ribosomal subunit protein uS15c (rps15), found in Adiantum capillus-veneris (Maidenhair fern).